The sequence spans 685 residues: Protein OCTOPUS (685 aa).

Disordered stretches follow at residues 1–34 (MNPA…CNRH), 152–202 (RNLP…DYVE), and 280–314 (KWRQ…RQLR). The span at 179–202 (VNDEGEAESDDEELEEEEEEDYVE) shows a compositional bias: acidic residues. Positions 280–291 (KWRQNQKMKKRR) are enriched in basic residues. The span at 292 to 314 (NGGDHRPGSARLPVEKPIGRQLR) shows a compositional bias: basic and acidic residues. Ser-318 is subject to Phosphoserine. The tract at residues 419–471 (VEEPAPPPPVVNQTNGVSDPVIIPGGSIQTRDYYTDSSSRRRKSLDRSSSSMR) is disordered. Residues 549 to 578 (LIYRKSVNKYEEEEEEEEDRYRRLNGGMVE) adopt a coiled-coil conformation. A disordered region spans residues 584–640 (SWPELRNGGGGGGGPRMVRSNSNVSWRSSGGGSARKVNGLDRRNKSSRYSPKNGENG). Low complexity predominate over residues 601–611 (VRSNSNVSWRS).

The protein belongs to the OCTOPUS family. In terms of assembly, interacts with VCC. In terms of processing, phosphorylation at Ser-318 amplifies the promotion of protophloem differentiation. In terms of tissue distribution, expressed in provascular cells and phloem initials (e.g. protophloem, metaphloem, sieve element precursor cells and sieve element procambium precursor cells).

The protein resides in the cell membrane. Its subcellular location is the cytoplasm. In terms of biological role, potentiates primary root protophloem differentiation. Required, together with VCC, for embryo provasculature development and cotyledon vascular complexity and connectivity. Regulates roots architecture. Mediates the recruitment of ASK7/BIN2 to the plasma membrane. This Arabidopsis thaliana (Mouse-ear cress) protein is Protein OCTOPUS.